The primary structure comprises 449 residues: Heterogeneous nuclear ribonucleoprotein H (449 aa).

An N-acetylmethionine modification is found at methionine 1. N-acetylmethionine; in Heterogeneous nuclear ribonucleoprotein H, N-terminally processed is present on methionine 2. The 80-residue stretch at 11-90 (FVVKVRGLPW…RYVEVFKSNN (80 aa)) folds into the RRM 1 domain. Serine 23 is modified (phosphoserine). Lysine 35 participates in a covalent cross-link: Glycyl lysine isopeptide (Lys-Gly) (interchain with G-Cter in SUMO2). Serine 54 and serine 63 each carry phosphoserine. Residues lysine 87 and lysine 98 each participate in a glycyl lysine isopeptide (Lys-Gly) (interchain with G-Cter in SUMO2) cross-link. The 78-residue stretch at 111–188 (GFVRLRGLPF…RYIEIFKSSR (78 aa)) folds into the RRM 2 domain. Residue arginine 233 is modified to Dimethylated arginine; alternate. An Omega-N-methylarginine; alternate modification is found at arginine 233. Residues 234 to 249 (GAYGGGYGGYDDYNGY) form a 1-1 repeat. A 2 X 16 AA Gly-rich approximate repeats region spans residues 234-433 (GAYGGGYGGY…YGGQSSMSGY (200 aa)). Residue tyrosine 246 is modified to Phosphotyrosine. Positions 289–364 (HCVHMRGLPY…RYVELFLNST (76 aa)) constitute an RRM 3 domain. Serine 310 carries the phosphoserine modification. 3 tandem repeats follow at residues 354 to 372 (HRYVELFLNSTAGASGGAY), 374 to 392 (HRYVELFLNSTAGASGGAY), and 418 to 433 (GGYGGGYGGQSSMSGY). The interval 354–392 (HRYVELFLNSTAGASGGAYEHRYVELFLNSTAGASGGAY) is 2 X 19 AA perfect repeats.

As to quaternary structure, part of a ternary complex containing FUBP2, PTBP1, PTBP2 and HNRNPH1. Identified in the spliceosome C complex. Interacts with IGF2BP1. Interacts with CUGBP1; the interaction is RNA-dependent. Interacts with MBNL1; the interaction in RNA-independent.

The protein localises to the nucleus. The protein resides in the nucleoplasm. This protein is a component of the heterogeneous nuclear ribonucleoprotein (hnRNP) complexes which provide the substrate for the processing events that pre-mRNAs undergo before becoming functional, translatable mRNAs in the cytoplasm. Mediates pre-mRNA alternative splicing regulation. Inhibits, together with CUGBP1, insulin receptor (IR) pre-mRNA exon 11 inclusion in myoblast. Binds to the IR RNA. Binds poly(RG). In Mus musculus (Mouse), this protein is Heterogeneous nuclear ribonucleoprotein H (Hnrnph1).